A 147-amino-acid polypeptide reads, in one-letter code: Putative protein CLUHP3 (147 aa).

The segment at 14–47 is disordered; the sequence is KEPEGGRRRLSHPGNMGWMRPSQETTPPDRSHHS.

In Homo sapiens (Human), this protein is Putative protein CLUHP3 (CLUHP3).